The chain runs to 1381 residues: DNA-directed RNA polymerase subunit beta'' (1381 aa).

4 residues coordinate Zn(2+): cysteine 224, cysteine 296, cysteine 303, and cysteine 306.

The protein belongs to the RNA polymerase beta' chain family. RpoC2 subfamily. In terms of assembly, in plastids the minimal PEP RNA polymerase catalytic core is composed of four subunits: alpha, beta, beta', and beta''. When a (nuclear-encoded) sigma factor is associated with the core the holoenzyme is formed, which can initiate transcription. Zn(2+) is required as a cofactor.

It is found in the plastid. The protein localises to the chloroplast. The enzyme catalyses RNA(n) + a ribonucleoside 5'-triphosphate = RNA(n+1) + diphosphate. Functionally, DNA-dependent RNA polymerase catalyzes the transcription of DNA into RNA using the four ribonucleoside triphosphates as substrates. The protein is DNA-directed RNA polymerase subunit beta'' of Drimys granadensis.